Consider the following 1104-residue polypeptide: tRNA ligase 1 (1104 aa).

Lys-152 acts as the N6-AMP-lysine intermediate in catalysis.

This sequence belongs to the TRL1 family. The cofactor is Mg(2+). Mainly expressed in proliferating cells and tissues such as root meristems, the vasculature of developing plantlets, flowers and elongating tissue.

It is found in the nucleus. The protein resides in the cytoplasm. It carries out the reaction ATP + (ribonucleotide)n-3'-hydroxyl + 5'-phospho-(ribonucleotide)m = (ribonucleotide)n+m + AMP + diphosphate.. With respect to regulation, requires the presence of NTP, preferentially ATP rather than dATP, UTP, CTP and GTP, respectively, to mediate ribonucleotide 5'-phosphorylation. Its function is as follows. Essential component of stress-response pathways entailing repair of RNA breaks with 2',3'-cyclic phosphate and 5'-OH ends. Tri-functional enzyme that repairs RNA breaks with 2',3'-cyclic-PO(4) and 5'-OH ends. The ligation activity requires three sequential enzymatic activities: opening of the 2'3'-cyclic phosphodiester bond of the 5' half-tRNA leaving a 2'-phosphomonoester (CPDase activity), phosphorylation of the 5' terminus of the 3' half-tRNA in the presence of ATP (kinase activity) and ligation of the two tRNA halves in an ATP-dependent reaction (ligase activity). Deficient in transferring AMP to pRNA(OH) to form AppRNA(OH) but proficient at sealing pre-adenylylated AppRNA(OH). CPDase and kinase reactions are almost insensitive to RNA length, whereas the ligase activity decreases with shorter RNA size. Can also splice DNA ended by a single 3'-terminal ribonucleoside 2',3'-cyclic-PO(4). Binds to mRNA, mature and immature. Exhibits tRNA ligase activity in vitro. Required for the splicing of precursor tRNA molecules containing introns. Can circularize an intron cleaved from a pre-tRNA by splicing endonuclease in vitro. Seems not involved in unfolded protein response (UPR) in the endoplasmic reticulum. Involved in auxin signaling and polar transport during organ morphogenesis. The chain is tRNA ligase 1 from Arabidopsis thaliana (Mouse-ear cress).